We begin with the raw amino-acid sequence, 140 residues long: Large ribosomal subunit protein uL11 (140 aa).

This sequence belongs to the universal ribosomal protein uL11 family. In terms of assembly, part of the ribosomal stalk of the 50S ribosomal subunit. Interacts with L10 and the large rRNA to form the base of the stalk. L10 forms an elongated spine to which L12 dimers bind in a sequential fashion forming a multimeric L10(L12)X complex. In terms of processing, one or more lysine residues are methylated.

Functionally, forms part of the ribosomal stalk which helps the ribosome interact with GTP-bound translation factors. The chain is Large ribosomal subunit protein uL11 from Oleidesulfovibrio alaskensis (strain ATCC BAA-1058 / DSM 17464 / G20) (Desulfovibrio alaskensis).